Reading from the N-terminus, the 247-residue chain is 2,3-bisphosphoglycerate-dependent phosphoglycerate mutase (247 aa).

Substrate contacts are provided by residues 8–15 (RHGESTWN), 21–22 (TG), Arg-60, 87–90 (ERHY), Lys-98, 114–115 (RR), and 183–184 (GN). The active-site Tele-phosphohistidine intermediate is the His-9. Catalysis depends on Glu-87, which acts as the Proton donor/acceptor.

This sequence belongs to the phosphoglycerate mutase family. BPG-dependent PGAM subfamily. Homodimer.

The enzyme catalyses (2R)-2-phosphoglycerate = (2R)-3-phosphoglycerate. It participates in carbohydrate degradation; glycolysis; pyruvate from D-glyceraldehyde 3-phosphate: step 3/5. In terms of biological role, catalyzes the interconversion of 2-phosphoglycerate and 3-phosphoglycerate. This is 2,3-bisphosphoglycerate-dependent phosphoglycerate mutase from Albidiferax ferrireducens (strain ATCC BAA-621 / DSM 15236 / T118) (Rhodoferax ferrireducens).